The sequence spans 358 residues: Membrane-bound lytic murein transglycosylase C (358 aa).

Residues 1-16 (MKKILALLVIAPLLVS) form the signal peptide. The N-palmitoyl cysteine moiety is linked to residue Cys-17. Residue Cys-17 is the site of S-diacylglycerol cysteine attachment.

This sequence belongs to the transglycosylase Slt family.

Its subcellular location is the cell outer membrane. The catalysed reaction is Exolytic cleavage of the (1-&gt;4)-beta-glycosidic linkage between N-acetylmuramic acid (MurNAc) and N-acetylglucosamine (GlcNAc) residues in peptidoglycan, from either the reducing or the non-reducing ends of the peptidoglycan chains, with concomitant formation of a 1,6-anhydrobond in the MurNAc residue.. In terms of biological role, murein-degrading enzyme. May play a role in recycling of muropeptides during cell elongation and/or cell division. The chain is Membrane-bound lytic murein transglycosylase C from Yersinia enterocolitica serotype O:8 / biotype 1B (strain NCTC 13174 / 8081).